The primary structure comprises 241 residues: Zinc finger CCHC domain-containing protein 17 (241 aa).

One can recognise an S1 motif domain in the interval 16–88 (YTIFQGEVAM…DRIKVSLSMK (73 aa)). At Ser114 the chain carries Phosphoserine. The segment at 131–148 (TTCKKCGCKGHFAKDCFM) adopts a CCHC-type zinc-finger fold. At Lys144 the chain carries N6-acetyllysine. The interval 161–241 (EEEEKEEAKS…KKKHKKKHKE (81 aa)) is disordered. Residues 166-178 (EEAKSAEFEKPDP) are compositionally biased toward basic and acidic residues. Positions 182 to 198 (PSRKRKKEKKKKKHRDR) are enriched in basic residues. Phosphoserine is present on Ser183. Over residues 211–225 (DTGKRARHTSKDSKA) the composition is skewed to basic and acidic residues. Residues 226–241 (AKKKKKKKKHKKKHKE) show a composition bias toward basic residues.

Interacts with PNN. Associates with the 60S ribosomal subunit.

The protein resides in the nucleus. It localises to the nucleolus. This is Zinc finger CCHC domain-containing protein 17 (ZCCHC17) from Homo sapiens (Human).